The primary structure comprises 329 residues: GTP 3',8-cyclase (329 aa).

The region spanning 1 to 229 (MNQIDYLRIS…EGQVRGNGPA (229 aa)) is the Radical SAM core domain. Position 8 (Arg8) interacts with GTP. The [4Fe-4S] cluster site is built by Cys15 and Cys19. Tyr21 contacts S-adenosyl-L-methionine. [4Fe-4S] cluster is bound at residue Cys22. Arg60 contributes to the GTP binding site. Gly64 lines the S-adenosyl-L-methionine pocket. Position 91 (Thr91) interacts with GTP. Ser115 provides a ligand contact to S-adenosyl-L-methionine. Lys155 lines the GTP pocket. Met189 lines the S-adenosyl-L-methionine pocket. [4Fe-4S] cluster is bound by residues Cys252 and Cys255. 257-259 (RLR) serves as a coordination point for GTP. Cys269 is a binding site for [4Fe-4S] cluster.

Belongs to the radical SAM superfamily. MoaA family. In terms of assembly, monomer and homodimer. The cofactor is [4Fe-4S] cluster.

The catalysed reaction is GTP + AH2 + S-adenosyl-L-methionine = (8S)-3',8-cyclo-7,8-dihydroguanosine 5'-triphosphate + 5'-deoxyadenosine + L-methionine + A + H(+). The protein operates within cofactor biosynthesis; molybdopterin biosynthesis. In terms of biological role, catalyzes the cyclization of GTP to (8S)-3',8-cyclo-7,8-dihydroguanosine 5'-triphosphate. This Microcystis aeruginosa (strain NIES-843 / IAM M-2473) protein is GTP 3',8-cyclase.